The sequence spans 164 residues: UPF0178 protein RPD_2254 (164 aa).

This sequence belongs to the UPF0178 family.

This is UPF0178 protein RPD_2254 from Rhodopseudomonas palustris (strain BisB5).